The primary structure comprises 345 residues: Beta-hexosaminidase (345 aa).

Residues Asp60, Arg68, Arg132, and 162–163 contribute to the substrate site; that span reads KH. Catalysis depends on His175, which acts as the Proton donor/acceptor. Asp247 functions as the Nucleophile in the catalytic mechanism.

It belongs to the glycosyl hydrolase 3 family. NagZ subfamily.

It localises to the cytoplasm. It catalyses the reaction Hydrolysis of terminal non-reducing N-acetyl-D-hexosamine residues in N-acetyl-beta-D-hexosaminides.. Its pathway is cell wall biogenesis; peptidoglycan recycling. Its function is as follows. Plays a role in peptidoglycan recycling by cleaving the terminal beta-1,4-linked N-acetylglucosamine (GlcNAc) from peptide-linked peptidoglycan fragments, giving rise to free GlcNAc, anhydro-N-acetylmuramic acid and anhydro-N-acetylmuramic acid-linked peptides. This is Beta-hexosaminidase from Actinobacillus pleuropneumoniae serotype 5b (strain L20).